We begin with the raw amino-acid sequence, 878 residues long: RNA-directed RNA polymerase (878 aa).

Residue 258–265 (GLPYVGRT) coordinates GTP. Positions 397-597 (LVYADNIYIV…DKERLFCSAA (201 aa)) constitute a RdRp catalytic domain. The tract at residues 845-878 (GAGTSRPMGMEAPTRSKNAVKMAKRAQRQKESRQ) is disordered.

As to quaternary structure, interacts with VP3 in the cytoplasm. Post-translationally, may exist in multiple phosphorylated forms.

It is found in the virion. It carries out the reaction RNA(n) + a ribonucleoside 5'-triphosphate = RNA(n+1) + diphosphate. In terms of biological role, RNA-dependent RNA polymerase which is found both free and covalently attached to the genomic RNA. May also contain guanylyl and methyl transferase activities. The chain is RNA-directed RNA polymerase (VP1) from Gallus gallus (Chicken).